The primary structure comprises 72 residues: MAFLKKSLFLVLFLGLVSLSICEKEKRQNGEDEDENEAANHEEGSEEKRGLFDIVKKVVGAIGSLGKRNDVE.

A signal peptide spans 1–22; the sequence is MAFLKKSLFLVLFLGLVSLSIC. Positions 23 to 49 are excised as a propeptide; that stretch reads EKEKRQNGEDEDENEAANHEEGSEEKR. The disordered stretch occupies residues 27–47; that stretch reads RQNGEDEDENEAANHEEGSEE. Residues 38–47 are compositionally biased toward basic and acidic residues; that stretch reads AANHEEGSEE. Residue Leu65 is modified to Leucine amide. The propeptide occupies 69 to 72; it reads NDVE.

Amidation is essential for antibacterial activity against Gram-positive bacteria. In terms of tissue distribution, expressed by the skin dorsal glands.

It localises to the secreted. The protein localises to the target cell membrane. Functionally, amphipathic alpha-helical antimicrobial peptide with weak to moderate activity against Gram-positive bacteria, and no activity against Gram-negative bacteria. Probably acts by disturbing membrane functions with its amphipathic structure. Strongly inhibits the formation of NO by neuronal nitric oxide synthase (nNOS) at micromolar concentrations. Acts by a non-competitive mechanism, probably by binding to calcium/calmodulin and as a consequence blocking calmodulin attachment to nNOS. The protein is Aurein-2.3 of Ranoidea aurea (Green and golden bell frog).